The primary structure comprises 132 residues: Small integral membrane protein 33 (132 aa).

Residues Met1–Glu28 are disordered. Residue Asn15 is glycosylated (N-linked (GlcNAc...) asparagine). Residues Pro43 to Val63 traverse the membrane as a helical segment. Residues Pro99–Leu132 are disordered.

Its subcellular location is the membrane. The chain is Small integral membrane protein 33 from Homo sapiens (Human).